The following is a 324-amino-acid chain: Taste receptor type 2 member 116 (324 aa).

Over 1 to 2 (MN) the chain is Extracellular. Residues 3–23 (GVLYITFTVILSVEVIIGNFG) form a helical membrane-spanning segment. Residues 24–55 (NGIIALVNIMDLAKRRKISSVDQILTALAISR) lie on the Cytoplasmic side of the membrane. The helical transmembrane segment at 56–76 (IVLLWLVLVSWWLSMFYPGQW) threads the bilayer. Residues 77–94 (MTEGIDVIVHNVWTTLNQ) lie on the Extracellular side of the membrane. A helical membrane pass occupies residues 95 to 115 (ISLWLATSFSVFCFLKVANFS). Residues 116-128 (NTIFFYLKIRVKK) are Cytoplasmic-facing. Residues 129–149 (VMTGTLIMFLLLLGLNIIVIN) traverse the membrane as a helical segment. At 150-183 (ASKTILIPEYKVNMSNSLNLKNTQISMLFPFANT) the chain is on the extracellular side. The N-linked (GlcNAc...) asparagine glycan is linked to Asn-162. The chain crosses the membrane as a helical span at residues 184–204 (LFGFIPFAVSLVTFLLLFFSL). Residues 205–236 (WKHQRKMHHGAQGCRDSSTKAHIRVLQTLIAS) are Cytoplasmic-facing. A helical membrane pass occupies residues 237 to 257 (ILLYFVFFLSLVVKVWISLFL). The Extracellular portion of the chain corresponds to 258–261 (ERML). A helical transmembrane segment spans residues 262–282 (LLLITQAAKIAFPSLHPWVLI). The Cytoplasmic portion of the chain corresponds to 283-324 (LGNAKLRKASLSALQWLRCRHKDEHRRVQRPEVHSCGSSCMP).

Belongs to the G-protein coupled receptor T2R family.

It is found in the membrane. Its function is as follows. Putative taste receptor which may play a role in the perception of bitterness. The chain is Taste receptor type 2 member 116 from Rattus norvegicus (Rat).